A 308-amino-acid polypeptide reads, in one-letter code: Putative T-box protein 30/42 (308 aa).

A DNA-binding region (T-box) is located at residues 11–192 (MSNEELWKER…KHSTFGNRSE (182 aa)). Positions 186–220 (TFGNRSEGGIKRKTSDAAGQLPSKRSSKKPVKKDV) are disordered.

Its subcellular location is the nucleus. Functionally, involved in the regulatory network to control embryonic patterning and morphogenesis. Implicated in negatively regulating vab-7 expression at the anterior of embryos. The protein is Putative T-box protein 30/42 (tbx-30) of Caenorhabditis elegans.